We begin with the raw amino-acid sequence, 97 residues long: Exodeoxyribonuclease 7 small subunit (97 aa).

The disordered stretch occupies residues 64–97; that stretch reads NGQLHPAEEKGDDVSNNGVQNQGYKSQFLDGDVF. Polar residues predominate over residues 77 to 88; sequence VSNNGVQNQGYK.

It belongs to the XseB family. Heterooligomer composed of large and small subunits.

It is found in the cytoplasm. It catalyses the reaction Exonucleolytic cleavage in either 5'- to 3'- or 3'- to 5'-direction to yield nucleoside 5'-phosphates.. Its function is as follows. Bidirectionally degrades single-stranded DNA into large acid-insoluble oligonucleotides, which are then degraded further into small acid-soluble oligonucleotides. In Limosilactobacillus fermentum (strain NBRC 3956 / LMG 18251) (Lactobacillus fermentum), this protein is Exodeoxyribonuclease 7 small subunit.